A 187-amino-acid chain; its full sequence is Oligoribonuclease (187 aa).

Residues 7-170 (LCWLDMEMTG…DDILESIEEM (164 aa)) enclose the Exonuclease domain. Residue Tyr-128 is part of the active site.

It belongs to the oligoribonuclease family.

It is found in the cytoplasm. In terms of biological role, 3'-to-5' exoribonuclease specific for small oligoribonucleotides. In Neisseria meningitidis serogroup A / serotype 4A (strain DSM 15465 / Z2491), this protein is Oligoribonuclease.